We begin with the raw amino-acid sequence, 384 residues long: D-galactosamine-6-phosphate deaminase AgaS (384 aa).

SIS domains are found at residues 45–197 and 215–364; these read LEPL…SQTF and SEGV…PDTP.

This sequence belongs to the SIS family. AgaS subfamily.

It catalyses the reaction D-galactosamine 6-phosphate + H2O = D-tagatopyranose 1-phosphate + NH4(+). Its function is as follows. Catalyzes the isomerization-deamination of galactosamine 6-phosphate to form tagatofuranose 6-phosphate and ammonium ion. The protein is D-galactosamine-6-phosphate deaminase AgaS of Escherichia coli O157:H7.